Reading from the N-terminus, the 154-residue chain is Mating pheromone 2 (154 aa).

Positions Met-1–Ala-16 are cleaved as a signal peptide. The propeptide occupies Phe-17–Lys-52.

The protein localises to the secreted. In terms of biological role, mating ciliate pheromones (or gamones) are diffusible extracellular communication signals that distinguish different intraspecific classes of cells commonly referred to as 'mating types'. They prepare the latter for conjugation by changing their cell surface properties. The sequence is that of Mating pheromone 2 from Euplotoides octocarinatus (Freshwater ciliate).